Here is a 323-residue protein sequence, read N- to C-terminus: Glucokinase (323 aa).

An ATP-binding site is contributed by G8 to T13.

The protein belongs to the bacterial glucokinase family.

It is found in the cytoplasm. It catalyses the reaction D-glucose + ATP = D-glucose 6-phosphate + ADP + H(+). In Yersinia enterocolitica serotype O:8 / biotype 1B (strain NCTC 13174 / 8081), this protein is Glucokinase.